Reading from the N-terminus, the 3184-residue chain is Probable serine/threonine-protein kinase pats1 (3184 aa).

Residues 369-378 (DPPPPPPSNS) show a composition bias toward pro residues. Disordered stretches follow at residues 369-516 (DPPP…QIPP) and 913-1013 (SITR…TSIL). Low complexity predominate over residues 379 to 415 (SPPISKSTSNNNLNVSNYHNNNNNNNNSNSNLSNSGN). Positions 421–450 (DFQSQNLVKSYNRENSGNSLNSMLHQTSLP) are enriched in polar residues. Positions 451-512 (NNNNSNVVNN…NNNNSNNNNS (62 aa)) are enriched in low complexity. The Myotubularin phosphatase domain occupies 842–1348 (CFPDHSLLQE…FQDTMWNEYF (507 aa)). Residues 913–934 (SITRATSPEDQNNGSSNYLLTP) are compositionally biased toward polar residues. Positions 935-993 (NSPNSSSSNLANNNNSNNNNINNNNNNNNNNNNNNNNNSNNNNNNNNNNNNNNNNNNNN) are enriched in low complexity. The segment covering 1000-1013 (SRSTTIDNGQTSIL) has biased composition (polar residues). LRR repeat units lie at residues 1391–1412 (FLETLDLSNLRLYYLPSESTLY), 1416–1438 (GLRELNLSKNNLNSISCSLSSLV), 1439–1460 (KLEKLSFEENSITNLPIETVVL), 1467–1488 (SLTELNLSSNQLIDLPIEFSMF), 1491–1512 (SLKKLHLKNNRFSAIPEVLGML), 1514–1535 (NLIELDLSELDLSSSTNSGVGI), 1541–1563 (KLCILNLNQTRIVELPKEFGDLK), 1564–1585 (SLEKLYLDFNSLVTLPHSFRQL), 1587–1608 (NLEELSLSFNSMTELPREVCFL), 1610–1631 (NLKKLMIEGNQIQFLPNEISQL), 1633–1654 (KLMILNVCKNKLDSLPASIGQL), 1656–1678 (QLVSLNLNNNSQLVSLRPTMGLL), and 1680–1701 (NLVELKLDGTRLKTPPPEIVSL). A Roc domain is found at 1716 to 1910 (GQEQCYKMKL…EKLEALVQSQ (195 aa)). Residues 1716–1910 (GQEQCYKMKL…EKLEALVQSQ (195 aa)) are small GTPase-like. GTP-binding positions include 1729–1736 (GQENVGKT), 1797–1801 (DFAGQ), and 1854–1857 (THLD). The region spanning 1918-2127 (PRSYMLLENL…KCYWKNGMIL (210 aa)) is the COR domain. Positions 2247 to 2519 (LMIEELIGEG…RLIKIAEAMF (273 aa)) constitute a Protein kinase domain. Residues 2253–2261 (IGEGGAALV) and Lys2274 contribute to the ATP site. Asp2379 acts as the Proton acceptor in catalysis. 2 disordered regions span residues 2528 to 2609 (YQQQ…TISH) and 2652 to 2671 (NSINNSNSNNEQPLSPNSLL). Positions 2529 to 2555 (QQQQQQQQQQQQSSPSKSSSTSPIIKS) are enriched in low complexity. Over residues 2556–2576 (LNLSTVSELGESSNQTPKQNI) the composition is skewed to polar residues. WD repeat units follow at residues 2745-2785 (PNQG…KYIQ), 2790-2829 (ANKDKKRIHCLYPYMNTVWCGSADDSITIWDIDTYQKIKS), 2909-2947 (AHERAIHAMIQVDDHVWTASSDGTIKVWSSTCQSVHTIE), 2949-2986 (AHSSRIFTLELVGDFVWSGSWDTTIKIWSTKDYHLVSE), and 2990-3040 (KHKD…NSRS). Over residues 3055–3126 (GSSNSITNSN…NYYYSNNVNS (72 aa)) the composition is skewed to low complexity. The tract at residues 3055 to 3164 (GSSNSITNSN…TPPGSKGLMQ (110 aa)) is disordered. Residues 3141–3157 (HEQTSPNSATPLSSTPP) show a composition bias toward polar residues.

It belongs to the protein kinase superfamily. TKL Ser/Thr protein kinase family. ROCO subfamily.

It carries out the reaction L-seryl-[protein] + ATP = O-phospho-L-seryl-[protein] + ADP + H(+). It catalyses the reaction L-threonyl-[protein] + ATP = O-phospho-L-threonyl-[protein] + ADP + H(+). Functionally, may act as a serine/threonine-protein kinase and guanine-nucleotide releasing factor. Essential regulator of cytokinesis involved in the binding to actomyosin cytoskeleton. This Dictyostelium discoideum (Social amoeba) protein is Probable serine/threonine-protein kinase pats1 (pats1).